Consider the following 1190-residue polypeptide: JNK-interacting protein (1190 aa).

A disordered region spans residues 1 to 35 (MACNLSPVNEMADSITSSTPSEIVYGGPGSPDEHR). The region spanning 24 to 112 (VYGGPGSPDE…QTQYEREKAL (89 aa)) is the RH1 domain. A coiled-coil region spans residues 78-165 (LDLAYLERDE…TDHASRLEER (88 aa)). Residues 263–364 (DEFSSDIEPS…DDTSDDGSLG (102 aa)) form a disordered region. The segment covering 277–292 (PQSSADALTSPITTKE) has biased composition (polar residues). A coiled-coil region spans residues 383-491 (KNALNIVKND…EESIKWTEMQ (109 aa)). In terms of domain architecture, RH2 spans 456-542 (RKRFTRSEMQ…RASSSRGKMT (87 aa)). Residues 775 to 829 (EDGVPTYCSNDMKPSPKRTRDFSISEVAPVDSSAPVKEDPLPPPANRPGGRAALP) are disordered.

Belongs to the JIP scaffold family. Expressed in neurons of the ventral cord, retrovesicular and preanal ganglia and nerve ring, intestinal cells, seam and hypodermal cells, body wall, head muscle and pharynx.

It localises to the cytoplasm. The protein localises to the perinuclear region. In terms of biological role, the JNK-interacting protein (JIP) group of scaffold proteins selectively mediates JNK signaling by aggregating specific components of the MAPK cascade to form a functional JNK signaling module. May function as a regulator of synaptic vesicle transport, through interactions with the JNK-signaling components and motor proteins. Binds specific components of the JNK signaling pathway namely jnk-1, jkk-1 and sek-1. Associates with components of the motor protein, kinesin-1. Pre-assembled unc-16 scaffolding complexes are then transported as a cargo of kinesin, to the required subcellular location. Regulates the retrograde transport of autophagosomes from the neurites to the cell body of AIY interneurons. The polypeptide is JNK-interacting protein (Caenorhabditis elegans).